The chain runs to 65 residues: Hainantoxin-X.2 (65 aa).

Residues 1–20 (MNVKILVLVAVLCLVVSTHA) form the signal peptide. A propeptide spanning residues 21–37 (ERHSKTDMEDSPMIQER) is cleaved from the precursor. Disulfide bonds link Cys39–Cys56, Cys46–Cys59, and Cys55–Cys64.

The protein belongs to the neurotoxin 36 family. 02 subfamily. As to expression, expressed by the venom gland.

The protein localises to the secreted. In terms of biological role, reversibly blocks N-type calcium channels (Cav2.2/CACNA1B) in rat dorsal root ganglion cells. Elicits no toxic symptoms in either vertebrates or invertebrates during a period of 48 hours post-injection, when it was assayed in vivo by direct injection into mice and cockroaches. This chain is Hainantoxin-X.2, found in Cyriopagopus hainanus (Chinese bird spider).